A 468-amino-acid chain; its full sequence is Neurexin-1-beta (468 aa).

The first 46 residues, 1 to 46 (MYQRMLRCGAELGSPGGGSSGGAGGRLALLWIVPLTLSGLLGVAWG), serve as a signal peptide directing secretion. Over 47-391 (ASSLGAHHIH…AEVIRESSST (345 aa)) the chain is Extracellular. A Laminin G-like domain is found at 87-285 (YIFSKGGGQI…DANIAIVGNV (199 aa)). Residues D137 and V154 each contribute to the Ca(2+) site. N184 carries an N-linked (GlcNAc...) asparagine glycan. The essential for interaction with CBLN1; modulates interaction affinity with NLGN1, NLGN2 and NLGN3; prevents interaction with DAG1/alpha-dystroglycan; modulates interaction with alpha-latrotoxin stretch occupies residues 201–230 (GNNDNERLAIARQRIPYRLGRVVDEWLLDK). Positions 236 and 238 each coordinate Ca(2+). O-linked (Xyl...) (heparan sulfate) serine glycosylation occurs at S346. Positions 350 to 381 (PSDDEDIDPCEPSSGGLANPTRVGGREPYPGS) are disordered. Residues 392-414 (TGMVVGIVAAAALCILILLYAMY) traverse the membrane as a helical segment. Residues 415–468 (KYRNRDEGSYHVDESRNYISNSAQSNGAVVKEKQPSSAKSANKNKKNKDKEYYV) lie on the Cytoplasmic side of the membrane. A disordered region spans residues 435–468 (NSAQSNGAVVKEKQPSSAKSANKNKKNKDKEYYV). Phosphoserine is present on residues S450, S451, and S454.

This sequence belongs to the neurexin family. In terms of assembly, the cytoplasmic C-terminal region binds to CASK. Binds NLGN1, NLGN2 and NLGN3, DAG1 (alpha-dystroglycan) and alpha-latrotoxin. Binding to neuroligins is calcium-dependent, and the binding preference ranks as follow: NLGN1 &gt; NLGN4 &gt;&gt; NLGN3 &gt; NLGN2. Interacts with CBLN2 and more weakly with CBLN4. Interacts with CBLN1; interaction is CBLN1 hexamer form-dependent; CBLN1-binding is calcium-independent; isoform 1b does not interact with CBLN1. Interacts with CLSTN3. In terms of processing, N-glycosylated. O-glycosylated; contains heparan sulfate. Heparan sulfate attachment is required for synapse development by mediating interactions with neuroligins. In terms of tissue distribution, brain.

The protein resides in the presynaptic cell membrane. In terms of biological role, neuronal cell surface protein involved in cell recognition and cell adhesion by forming intracellular junctions through binding to neuroligins. Plays a role in formation of synaptic junctions. Functions as part of a trans-synaptic complex by binding to cerebellins and postsynaptic GRID1. This interaction helps regulate the activity of NMDA and AMPA receptors at hippocampal synapses without affecting synapse formation. NRXN1B-CBLN2-GRID1 complex transduce presynaptic signals into postsynaptic NMDAR response. The polypeptide is Neurexin-1-beta (Rattus norvegicus (Rat)).